Here is a 677-residue protein sequence, read N- to C-terminus: DNA gyrase subunit B, novobiocin-resistant (677 aa).

The tract at residues 1-23 (MTTYDTRTATDTRGSEQPGHVGT) is disordered. The tract at residues 154–295 (IWTDGHRWTQ…RLLSAEIALQ (142 aa)) is novobiocin-binding. Positions 456 to 570 (SEIFIVEGDS…EGHVHLSRPP (115 aa)) constitute a Toprim domain. Mg(2+) is bound by residues E462, D535, and D537.

This sequence belongs to the type II topoisomerase GyrB family. As to quaternary structure, heterotetramer, composed of two GyrA and two GyrB chains. In the heterotetramer, GyrA contains the active site tyrosine that forms a transient covalent intermediate with DNA, while GyrB binds cofactors and catalyzes ATP hydrolysis. Requires Mg(2+) as cofactor. Mn(2+) is required as a cofactor. It depends on Ca(2+) as a cofactor.

It localises to the cytoplasm. It carries out the reaction ATP-dependent breakage, passage and rejoining of double-stranded DNA.. Functionally, a type II topoisomerase that negatively supercoils closed circular double-stranded (ds) DNA in an ATP-dependent manner to modulate DNA topology and maintain chromosomes in an underwound state. Negative supercoiling favors strand separation, and DNA replication, transcription, recombination and repair, all of which involve strand separation. Also able to catalyze the interconversion of other topological isomers of dsDNA rings, including catenanes and knotted rings. Type II topoisomerases break and join 2 DNA strands simultaneously in an ATP-dependent manner. The sequence is that of DNA gyrase subunit B, novobiocin-resistant from Streptomyces niveus (Streptomyces spheroides).